The sequence spans 468 residues: UDP-N-acetylmuramate--L-alanine ligase (468 aa).

ATP is bound at residue 114–120 (GTHGKTT).

Belongs to the MurCDEF family.

It is found in the cytoplasm. It carries out the reaction UDP-N-acetyl-alpha-D-muramate + L-alanine + ATP = UDP-N-acetyl-alpha-D-muramoyl-L-alanine + ADP + phosphate + H(+). It functions in the pathway cell wall biogenesis; peptidoglycan biosynthesis. Cell wall formation. The polypeptide is UDP-N-acetylmuramate--L-alanine ligase (Methylorubrum extorquens (strain PA1) (Methylobacterium extorquens)).